Here is a 402-residue protein sequence, read N- to C-terminus: Argininosuccinate synthase (402 aa).

Residues 10–18 (AYSGGLDTS) and alanine 37 each bind ATP. L-citrulline-binding residues include tyrosine 88 and serine 93. Glycine 118 contributes to the ATP binding site. Residues threonine 120, asparagine 124, and aspartate 125 each coordinate L-aspartate. Asparagine 124 is a binding site for L-citrulline. Residues arginine 128, serine 179, serine 188, glutamate 264, and tyrosine 276 each coordinate L-citrulline.

This sequence belongs to the argininosuccinate synthase family. Type 1 subfamily. As to quaternary structure, homotetramer.

Its subcellular location is the cytoplasm. The enzyme catalyses L-citrulline + L-aspartate + ATP = 2-(N(omega)-L-arginino)succinate + AMP + diphosphate + H(+). It participates in amino-acid biosynthesis; L-arginine biosynthesis; L-arginine from L-ornithine and carbamoyl phosphate: step 2/3. The protein is Argininosuccinate synthase of Alkalilimnicola ehrlichii (strain ATCC BAA-1101 / DSM 17681 / MLHE-1).